The chain runs to 180 residues: Superoxide dismutase [Cu-Zn] (180 aa).

The first 19 residues, 1-19 (MFMNLLTQVSNAIFPQVEA), serve as a signal peptide directing secretion. Cu cation is bound by residues His68, His70, and His85. Cys79 and Cys171 form a disulfide bridge. His85, His93, His102, and Asp105 together coordinate Zn(2+). A Cu cation-binding site is contributed by His142.

This sequence belongs to the Cu-Zn superoxide dismutase family. In terms of assembly, homodimer. Requires Cu cation as cofactor. The cofactor is Zn(2+).

The protein resides in the cytoplasm. The enzyme catalyses 2 superoxide + 2 H(+) = H2O2 + O2. The insertion of copper which activates the protein requires glutathione. This is independent of copper chaperone for SOD1 (CCS), which activates orthologs. In terms of biological role, protects cells against oxidative stress by converting superoxide radicals to hydrogen peroxide. Required for normal brood size. May be involved in regulating mpk-1 phosphorylation downstream of phosphatase ptp-2 during oocyte maturation. The chain is Superoxide dismutase [Cu-Zn] (sod-1) from Caenorhabditis elegans.